A 307-amino-acid chain; its full sequence is Mitochondrial 2-oxodicarboxylate carrier 2 (307 aa).

The next 6 helical transmembrane spans lie at 10–30 (LPFIYQFISGAVAGISELTVM), 76–95 (SRLYRGISSPMLMEAPKRAT), 122–142 (IAAGASAGMTEAAVIVPFELI), 171–191 (GLYKGIESTMWRNALWNGGYF), 215–235 (LIAGAIGGTVGTMLNTPFDVV), and 280–300 (CRLAPGGSLMLVVFTGMMNFF). 3 Solcar repeats span residues 10–106 (LPFI…YQKI), 116–200 (TTQK…VRNS), and 209–299 (QKTR…MMNF).

It belongs to the mitochondrial carrier (TC 2.A.29) family.

It localises to the mitochondrion inner membrane. Its function is as follows. Transports C5-C7 oxodicarboxylates across the inner membranes of mitochondria. Can transport 2-oxoadipate, 2-oxoglutarate, adipate, glutarate, 2-oxopimelate, oxaloacetate, citrate and malate. The main physiological role is probably to supply 2-oxoadipate and 2-oxoglutarate from the mitochondrial matrix to the cytosol where they are used in the biosynthesis of lysine and glutamate, respectively, and in lysine catabolism. The sequence is that of Mitochondrial 2-oxodicarboxylate carrier 2 (ODC2) from Saccharomyces cerevisiae (strain ATCC 204508 / S288c) (Baker's yeast).